The primary structure comprises 449 residues: MGKEKQHVSIVVIGHVDSGKSTTTGHLIYKCGGIDKRAIEKFEKEAAEMGKGSFKYAWVLDKLKAERERGITIDIALWKFETDKYNFTIIDAPGHRDFIKNMITGTSQADLAILVIASPPGEFEAGISQNGQTREHALLAYTLGVKQMIVACNKMDDKNVNWSKERYEEVSKEMDLYLKKVGYNPPKVPKVPTSGWTGENLFERTGGDHALGKWYKGPCLLEALDACDPPKRPVDKPLRLPLQDVYKIGGIGTVPVGRVETGVIKPGMVVTFAPSGLSTEVKSVEMHHEALTQAGPGDNVGFNVKNVSVKDLKRGYVCGDSKNDPPKGCASFNAQVIILNHPGEIHAGYAPVLDCHTAHIACKFSELILKMDRRSGKKLEDSPKMIKSGDAAMVKMVASKPMCVEAFTSYPPLGRFAVRDMRQTVAVGVIKSVEKKEVEGKMTKSAAKK.

The tr-type G domain maps to 5–234 (KQHVSIVVIG…DACDPPKRPV (230 aa)). A G1 region spans residues 14-21 (GHVDSGKS). GTP is bound at residue 14–21 (GHVDSGKS). An N6,N6-dimethyllysine modification is found at Lys55. The interval 70-74 (GITID) is G2. The residue at position 79 (Lys79) is an N6,N6,N6-trimethyllysine. A G3 region spans residues 91 to 94 (DAPG). GTP contacts are provided by residues 91-95 (DAPGH) and 153-156 (NKMD). The segment at 153-156 (NKMD) is G4. Lys187 is subject to N6,N6,N6-trimethyllysine. The interval 194-196 (SGW) is G5. N6-methyllysine is present on Lys265. N6,N6,N6-trimethyllysine occurs at positions 310 and 400.

This sequence belongs to the TRAFAC class translation factor GTPase superfamily. Classic translation factor GTPase family. EF-Tu/EF-1A subfamily.

Its subcellular location is the cytoplasm. This protein promotes the GTP-dependent binding of aminoacyl-tRNA to the A-site of ribosomes during protein biosynthesis. The chain is Elongation factor 1-alpha C (TEF-C) from Porphyra purpurea (Red seaweed).